A 182-amino-acid polypeptide reads, in one-letter code: MGEEQQKPEELNAPTDDAPQEKQQPADLSSETEKAKSKKKQELSEKDQVVKIQAWWRGTLVRRSLLHAALSAWIIQCWWRLILPKIMEKRRQSMLDTFQQEQWAVVRLQSWIRMWRIRRRYCRLLKAVRTIQSHWRGHTCSSRGVIKGQYRISTSQMHLELEVLLGSGPCIVTECIPLPIKQ.

Basic and acidic residues-rich tracts occupy residues 1-10 and 31-43; these read MGEEQQKPEE and ETEK…KQEL. The tract at residues 1-43 is disordered; it reads MGEEQQKPEELNAPTDDAPQEKQQPADLSSETEKAKSKKKQEL. IQ domains are found at residues 45–74 and 101–130; these read EKDQ…SAWI and EQWA…AVRT.

In terms of assembly, interacts with calmodulin. In terms of tissue distribution, specifically expressed in testes and mature spermatozoa (at protein level).

The protein localises to the cytoplasmic vesicle. Its subcellular location is the secretory vesicle. It localises to the acrosome. Functionally, involved in sperm capacitation and acrosome reaction. The protein is IQ domain-containing protein F1 of Mus musculus (Mouse).